A 430-amino-acid chain; its full sequence is ATP-dependent RNA helicase RhlB (430 aa).

Positions 9–37 (QKFSDFALHPQVIEALESKGFHYCTPIQA) match the Q motif motif. In terms of domain architecture, Helicase ATP-binding spans 40–219 (LPLTLSGRDV…FEQMNNAEYV (180 aa)). Residue 53–60 (AQTGTGKT) participates in ATP binding. A DEAD box motif is present at residues 165-168 (DEAD). The Helicase C-terminal domain occupies 245 to 390 (RLLQTLLEEE…LSKYNSDALM (146 aa)). Positions 392–430 (DLPAPKRLTRPPRSNNGPRRHNSAPRRSGAPRNNRKRAD) are disordered.

Belongs to the DEAD box helicase family. RhlB subfamily. In terms of assembly, component of the RNA degradosome, which is a multiprotein complex involved in RNA processing and mRNA degradation.

It localises to the cytoplasm. It carries out the reaction ATP + H2O = ADP + phosphate + H(+). In terms of biological role, DEAD-box RNA helicase involved in RNA degradation. Has RNA-dependent ATPase activity and unwinds double-stranded RNA. This chain is ATP-dependent RNA helicase RhlB, found in Pectobacterium atrosepticum (strain SCRI 1043 / ATCC BAA-672) (Erwinia carotovora subsp. atroseptica).